A 260-amino-acid polypeptide reads, in one-letter code: Global transcriptional regulator CodY (260 aa).

The GAF domain stretch occupies residues 1 to 159; that stretch reads MPNLLEKTRK…SSTVVGIQLL (159 aa). Positions 207–226 form a DNA-binding region, H-T-H motif; that stretch reads ASVIADRIGITRSVIVNALR.

This sequence belongs to the CodY family.

It localises to the cytoplasm. DNA-binding global transcriptional regulator which is involved in the adaptive response to starvation and acts by directly or indirectly controlling the expression of numerous genes in response to nutrient availability. During rapid exponential growth, CodY is highly active and represses genes whose products allow adaptation to nutrient depletion. The protein is Global transcriptional regulator CodY of Streptococcus pyogenes serotype M1.